Here is an 898-residue protein sequence, read N- to C-terminus: Serine/threonine-protein kinase TAO3 (898 aa).

The Protein kinase domain maps to 24-277 (FIGLHEIGHG…SAELLRHDFV (254 aa)). ATP contacts are provided by residues 30–38 (IGHGSFGAV) and Lys53. Asp147 (proton acceptor) is an active-site residue. Disordered stretches follow at residues 316-362 (TRNG…SQSS) and 405-425 (DEAGHGDPRPEPRPTQSVQSQ). Residue Ser324 is modified to Phosphoserine; by ATM. Residues Ser331, Ser343, Ser346, and Ser349 each carry the phosphoserine modification. A compositionally biased stretch (polar residues) spans 334–351 (GTSLNREMDSLGSNHSIP). Over residues 352-362 (SMSVSTGSQSS) the composition is skewed to low complexity. Phosphothreonine is present on Thr357. Ser359 is modified (phosphoserine). Basic and acidic residues predominate over residues 405-416 (DEAGHGDPRPEP). Ser442 carries the phosphoserine modification. Coiled coils occupy residues 452-502 (EQEN…THAN), 548-649 (FLES…HAML), and 754-879 (LKTL…DMES). The segment at 565–596 (EEMNEDHSTPKKEKQERISKHKENLQHTQAEE) is disordered. Lys830 is modified (N6-acetyllysine).

It belongs to the protein kinase superfamily. STE Ser/Thr protein kinase family. STE20 subfamily. As to quaternary structure, self-associates. Interacts with ERN1 and TRAF2. Interaction with TRAF2 is facilitated under ER stress conditions, such as treatment with tunicamycin, and may promote TRAF2 phosphorylation. Interacts (via N-terminus) with STK25; the interaction promotes STK25 abundance at the level of protein expression and/or stability. In terms of assembly, (Microbial infection) Interacts with herpes simplex virus 1 UL37 protein. Post-translationally, autophosphorylated. Phosphorylation at Ser-324 by ATM following DNA damage is required for activation of the p38/MAPK14 stress-activated MAPK cascade. Phosphorylated at Ser-324 and on Tyr residues during T cell activation. Phosphorylated by LRRK2. Ubiquitously expressed at a low level, and highly expressed in peripheral blood leukocytes (PBLs), thymus, spleen, kidney, skeletal muscle, heart and liver.

It is found in the cytoplasm. Its subcellular location is the cell membrane. It localises to the membrane raft. The protein localises to the lipid droplet. It carries out the reaction L-seryl-[protein] + ATP = O-phospho-L-seryl-[protein] + ADP + H(+). The enzyme catalyses L-threonyl-[protein] + ATP = O-phospho-L-threonyl-[protein] + ADP + H(+). Functionally, serine/threonine-protein kinase that acts as a regulator of the p38/MAPK14 stress-activated MAPK cascade and of the MAPK8/JNK cascade. In response to DNA damage, involved in the G2/M transition DNA damage checkpoint by activating the p38/MAPK14 stress-activated MAPK cascade, probably by mediating phosphorylation of upstream MAP2K3 and MAP2K6 kinases. Inhibits basal activity of the MAPK8/JNK cascade and diminishes its activation in response to epidermal growth factor (EGF). Positively regulates canonical T cell receptor (TCR) signaling by preventing early PTPN6/SHP1-mediated inactivation of LCK, ensuring sustained TCR signaling that is required for optimal activation and differentiation of T cells. Phosphorylates PTPN6/SHP1 on 'Thr-394', leading to its polyubiquitination and subsequent proteasomal degradation. Required for cell surface expression of metalloprotease ADAM10 on type 1 transitional B cells which is necessary for their NOTCH-mediated development into marginal zone B cells. Also required for the NOTCH-mediated terminal differentiation of splenic conventional type 2 dendritic cells. Positively regulates osteoblast differentiation by acting as an upstream activator of the JNK pathway. Promotes JNK signaling in hepatocytes and positively regulates hepatocyte lipid storage by inhibiting beta-oxidation and triacylglycerol secretion while enhancing lipid synthesis. Restricts age-associated inflammation by negatively regulating differentiation of macrophages and their production of pro-inflammatory cytokines. Plays a role in negatively regulating the abundance of regulatory T cells in white adipose tissue. In Homo sapiens (Human), this protein is Serine/threonine-protein kinase TAO3 (TAOK3).